Here is a 509-residue protein sequence, read N- to C-terminus: MPIRLHIFVSSARHAINSSALICRFIAFHLSPLLIHLSYFLIIDVLGFVALVVLRPSNHKYNPRYIDMFFLSTSAVTVTGLATTQMEDLSSSQIAVLTLLMFLGSEMFLSFLGLVLESSKQNKHDPENRRVSSVTVCEQSHLEEAIPQTPSMNSTDIKRSCHKYLVFVVLAYMIIILVTGSLLVFMYIAHVSSARDVLTRKSINKALFSISVTVSSFTNGGLLPTNESMAVFSSNNGLLLLLIGQILAGSTLLPMFLRLVIWALRGLRLAKAEEPDFMMNNSSSVGFSHLLPNLQTIFLAAVEVAFVGMTVILFCCLNWDSAVFAGLTSLQKITNALFMAVSARQAGENSIDCSLVAPAALVLFMVMMYTPSLTKLFSACQDHKQIGPESDDRTSKGKPFLKTMAFSPLAFNTTVIMLVCITERRSISTDPLNFSTFNIIFEVISAYGNIGLSTGYSCSRQLQHQDGIACHEKPYSFSGWWSEPGKLILVLAMLYGRLNSKDSTSARTR.

Residues 1–32 are Cytoplasmic-facing; that stretch reads MPIRLHIFVSSARHAINSSALICRFIAFHLSP. The next 2 membrane-spanning stretches (helical) occupy residues 33–53 and 96–116; these read LLIH…ALVV and VLTL…GLVL. At 117–164 the chain is on the cytoplasmic side; that stretch reads ESSKQNKHDPENRRVSSVTVCEQSHLEEAIPQTPSMNSTDIKRSCHKY. Helical transmembrane passes span 165 to 185 and 237 to 257; these read LVFV…LLVF and GLLL…PMFL. Residues 258 to 296 lie on the Cytoplasmic side of the membrane; that stretch reads RLVIWALRGLRLAKAEEPDFMMNNSSSVGFSHLLPNLQT. 2 helical membrane passes run 297-317 and 353-373; these read IFLA…FCCL and CSLV…TPSL. The Cytoplasmic portion of the chain corresponds to 374–400; it reads TKLFSACQDHKQIGPESDDRTSKGKPF. 2 helical membrane-spanning segments follow: residues 401-421 and 476-496; these read LKTM…LVCI and SFSG…MLYG. The Cytoplasmic segment spans residues 497–509; that stretch reads RLNSKDSTSARTR.

This sequence belongs to the TrkH potassium transport family. HKT (TC 2.A.38.3) subfamily. In terms of tissue distribution, expressed in spikelets, leaf blades, leaf sheaths, internodes, nodes, the base of stems and roots.

The protein localises to the cell membrane. It carries out the reaction K(+)(in) = K(+)(out). The enzyme catalyses Mg(2+)(in) = Mg(2+)(out). The catalysed reaction is Ca(2+)(in) = Ca(2+)(out). Its function is as follows. High-affinity potassium transporter that does not show potassium-sodium cotransport. Potassium transport seems to be independent of sodium. Mediates transport of the divalent cations magnesium and calcium in the absence of competing potassium ions. Selectivity for potassium is dominant over divalent cations, and magnesium and calcium transport may be small and may depend on competing potassium concentrations. In Oryza sativa subsp. japonica (Rice), this protein is Cation transporter HKT2;4.